The following is a 157-amino-acid chain: Protein Smg (157 aa).

The protein belongs to the Smg family.

The protein is Protein Smg of Yersinia pestis (strain Pestoides F).